The chain runs to 448 residues: MSLIASDHFRIVVGLGKSGMSLVRYLARRGLPFAVVDTRENPPELATLRAQYPQVEVRCGELDAEFLCSARELYVSPGLSLRTPALVQAAAKGVRISGDIDLFAREAKAPIVAITGSNAKSTVTTLVGEMAVAADKRVAVGGNLGTPALDLLADDIELYVLELSSFQLETCDRLNAEVATVLNVSEDHMDRYDGMADYHLAKHRIFRGARQVVVNRADALTRPLIADTVPCWSFGLNKPDFKAFGLIEEDGQKWLAFQFDKLLPVGELKIRGAHNYSNALAALALGHAVGLPFDAMLGALKAFSGLAHRCQWVRERQGVSYYDDSKATNVGAALAAIEGLGADIDGKLVLLAGGDGKGADFHDLREPVARFCRAVVLLGRDAGLIAQALGNAVPLVRVATLDEAVRQAAELAREGDAVLLSPACASLDMFKNFEERGRLFAKAVEELA.

UDP-N-acetyl-alpha-D-muramoyl-L-alanine is bound by residues K17, S18, T38, R39, and G78. 116-122 is an ATP binding site; that stretch reads GSNAKST. ADP is bound by residues A119, K120, S121, and T122. UDP-N-acetyl-alpha-D-muramoyl-L-alanine is bound by residues N143 and H188. Residues N278, R309, D324, and K326 each contribute to the ADP site.

The protein belongs to the MurCDEF family.

It is found in the cytoplasm. It carries out the reaction UDP-N-acetyl-alpha-D-muramoyl-L-alanine + D-glutamate + ATP = UDP-N-acetyl-alpha-D-muramoyl-L-alanyl-D-glutamate + ADP + phosphate + H(+). It participates in cell wall biogenesis; peptidoglycan biosynthesis. Its function is as follows. Involved in cell wall formation. Catalyzes the addition of D-glutamate to the peptidoglycan precursor UDP-N-acetylmuramoyl-L-alanine (UMA). In Pseudomonas aeruginosa (strain ATCC 15692 / DSM 22644 / CIP 104116 / JCM 14847 / LMG 12228 / 1C / PRS 101 / PAO1), this protein is UDP-N-acetylmuramoylalanine--D-glutamate ligase.